The primary structure comprises 451 residues: UPF0210 protein CA_C0479 (451 aa).

The protein belongs to the UPF0210 family. In terms of assembly, homodimer.

The sequence is that of UPF0210 protein CA_C0479 from Clostridium acetobutylicum (strain ATCC 824 / DSM 792 / JCM 1419 / IAM 19013 / LMG 5710 / NBRC 13948 / NRRL B-527 / VKM B-1787 / 2291 / W).